Consider the following 63-residue polypeptide: Large ribosomal subunit protein uL29 (63 aa).

The protein belongs to the universal ribosomal protein uL29 family.

The polypeptide is Large ribosomal subunit protein uL29 (Shewanella denitrificans (strain OS217 / ATCC BAA-1090 / DSM 15013)).